The sequence spans 200 residues: GTP cyclohydrolase 1 (200 aa).

Zn(2+) contacts are provided by cysteine 87, histidine 90, and cysteine 158.

This sequence belongs to the GTP cyclohydrolase I family. Toroid-shaped homodecamer, composed of two pentamers of five dimers.

The enzyme catalyses GTP + H2O = 7,8-dihydroneopterin 3'-triphosphate + formate + H(+). The protein operates within cofactor biosynthesis; 7,8-dihydroneopterin triphosphate biosynthesis; 7,8-dihydroneopterin triphosphate from GTP: step 1/1. The polypeptide is GTP cyclohydrolase 1 (Xanthomonas campestris pv. campestris (strain ATCC 33913 / DSM 3586 / NCPPB 528 / LMG 568 / P 25)).